Reading from the N-terminus, the 571-residue chain is Proline--tRNA ligase (571 aa).

The protein belongs to the class-II aminoacyl-tRNA synthetase family. ProS type 1 subfamily. As to quaternary structure, homodimer.

Its subcellular location is the cytoplasm. The catalysed reaction is tRNA(Pro) + L-proline + ATP = L-prolyl-tRNA(Pro) + AMP + diphosphate. Functionally, catalyzes the attachment of proline to tRNA(Pro) in a two-step reaction: proline is first activated by ATP to form Pro-AMP and then transferred to the acceptor end of tRNA(Pro). As ProRS can inadvertently accommodate and process non-cognate amino acids such as alanine and cysteine, to avoid such errors it has two additional distinct editing activities against alanine. One activity is designated as 'pretransfer' editing and involves the tRNA(Pro)-independent hydrolysis of activated Ala-AMP. The other activity is designated 'posttransfer' editing and involves deacylation of mischarged Ala-tRNA(Pro). The misacylated Cys-tRNA(Pro) is not edited by ProRS. The polypeptide is Proline--tRNA ligase (Histophilus somni (strain 129Pt) (Haemophilus somnus)).